A 547-amino-acid chain; its full sequence is MAAKEVKFGDSARQQMLKGVNVLADAVKVTLGPKGRNVIIEKSYGAPLVTKDGVTVAKEIELENKFENMGAQMVKEVASQANDVAGDGTTTATVLAQAIVAEGLKAVAAGRNPMDLKRGIDQAAAAVVKEIAAQSTPCTDTRAIEQVGTISANSDSSVGRIIAEAMERVGKEGVITVEEGSGFEDELAVVEGMQFDRGYLSPYFINNQETMSAELENPFILLVDKKISNIRDLLPVLEGVAKASRPLLIIAEDVEGEALATLVVNTMRGIVKVAAAKAPGFGDRRKAMLEDIAVLSGATVISEEVGLSLETATLDQLGTAKRVTLTKESTTIVDGAGNAANITSRVEQIRAEIANSSSDYDKEKLQERVAKLAGGVAVIKIGAATELAMKEKKARVDDALHATRAAVEEGVVAGGGVALVRALTKIVDLKGENEDQSVGITLALRAMEAPMRQIVINAGAEASVVVDKVKQGEGNFGYNAATGEYGDMLEMGILDPAKVTRSALQAAASVAGLMITTEAMIADLPKDDAGMPDMGGMGGMGGMGGMM.

ATP contacts are provided by residues T30–P33, K51, D87–T91, G415, N479–A481, and D495.

The protein belongs to the chaperonin (HSP60) family. In terms of assembly, forms a cylinder of 14 subunits composed of two heptameric rings stacked back-to-back. Interacts with the co-chaperonin GroES.

It localises to the cytoplasm. It catalyses the reaction ATP + H2O + a folded polypeptide = ADP + phosphate + an unfolded polypeptide.. In terms of biological role, together with its co-chaperonin GroES, plays an essential role in assisting protein folding. The GroEL-GroES system forms a nano-cage that allows encapsulation of the non-native substrate proteins and provides a physical environment optimized to promote and accelerate protein folding. The polypeptide is Chaperonin GroEL (Marinomonas sp. (strain MWYL1)).